Consider the following 613-residue polypeptide: 9-cis-epoxycarotenoid dioxygenase NCED5, chloroplastic (613 aa).

Polar residues predominate over residues 1–15 (MPTTFTPNSPASSCS). The transit peptide at 1–36 (MPTTFTPNSPASSCSIHHRASPSRGARNSVRFTRPR) directs the protein to the chloroplast. The interval 1–62 (MPTTFTPNSP…PPAYVPPPPP (62 aa)) is disordered. Over residues 37–50 (AAAAATNSVLSAPS) the composition is skewed to low complexity. Residues 51–62 (SVPPAYVPPPPP) are compositionally biased toward pro residues. Fe cation-binding residues include His305, His354, His419, and His600.

Belongs to the carotenoid oxygenase family. The cofactor is Fe(2+).

It is found in the plastid. The protein localises to the chloroplast. The enzyme catalyses a 9-cis-epoxycarotenoid + O2 = a 12'-apo-carotenal + 2-cis,4-trans-xanthoxin. The catalysed reaction is 9-cis-violaxanthin + O2 = (3S,5R,6S)-5,6-epoxy-3-hydroxy-5,6-dihydro-12'-apo-beta-caroten-12'-al + 2-cis,4-trans-xanthoxin. It carries out the reaction 9'-cis-neoxanthin + O2 = (3S,5R,6R)-3,5-dihydroxy-6,7-didehydro-5,6-dihydro-12'-apo-beta-caroten-12'-al + 2-cis,4-trans-xanthoxin. Its function is as follows. Has a 11,12(11',12') 9-cis epoxycarotenoid cleavage activity. Catalyzes the first step of abscisic-acid biosynthesis from carotenoids. The chain is 9-cis-epoxycarotenoid dioxygenase NCED5, chloroplastic from Oryza sativa subsp. japonica (Rice).